Consider the following 110-residue polypeptide: Host transcription reprogramming factor 2 (110 aa).

An N-terminal signal peptide occupies residues 1 to 18 (MHLKASSILALLVIGANA). The C2H2-type zinc finger occupies 68 to 96 (IMCGYCGKRFWNKPDLEKHIKLKPSKGGH). Residues 88–110 (KLKPSKGGHKGQPYKEHSWNRPT) form a disordered region. Basic and acidic residues predominate over residues 100–110 (PYKEHSWNRPT).

The protein localises to the secreted. It localises to the host nucleus. Secreted effector that translocates into the nuclei of host cells to reprogram the expression of immunity-associated genes by binding to effector binding elements (EBEs) in rice. Binds the 5'-CCACCTCC-3' EBE of promoters from targeted rice genes and probably recruits a yet to be determined host repressor. Causes ambivalent immunity with increased susceptibility to the hemibiotrophic pathogens Magnaporthe oryzae and Xanthomonas oryzae pv. oryzae, but enhances resistance to Cochliobolus miyabeanus, a necrotrophic pathogen. This chain is Host transcription reprogramming factor 2, found in Pyricularia oryzae (strain 70-15 / ATCC MYA-4617 / FGSC 8958) (Rice blast fungus).